We begin with the raw amino-acid sequence, 47 residues long: uncharacterized protein (47 aa).

Disordered stretches follow at residues M1–Q20 and E25–G47. Over residues E25 to Q40 the composition is skewed to basic and acidic residues.

This is an uncharacterized protein from Dictyostelium discoideum (Social amoeba).